The sequence spans 179 residues: Large ribosomal subunit protein uL5 (179 aa).

It belongs to the universal ribosomal protein uL5 family. Part of the 50S ribosomal subunit; part of the 5S rRNA/L5/L18/L25 subcomplex. Contacts the 5S rRNA and the P site tRNA. Forms a bridge to the 30S subunit in the 70S ribosome.

Functionally, this is one of the proteins that bind and probably mediate the attachment of the 5S RNA into the large ribosomal subunit, where it forms part of the central protuberance. In the 70S ribosome it contacts protein S13 of the 30S subunit (bridge B1b), connecting the 2 subunits; this bridge is implicated in subunit movement. Contacts the P site tRNA; the 5S rRNA and some of its associated proteins might help stabilize positioning of ribosome-bound tRNAs. This Shewanella amazonensis (strain ATCC BAA-1098 / SB2B) protein is Large ribosomal subunit protein uL5.